The chain runs to 1017 residues: Disease resistance protein RML1B (1017 aa).

The region spanning 12-176 (YKFNVFASFH…KIARDVLDKL (165 aa)) is the TIR domain. Glu-87 is a catalytic residue. The 257-residue stretch at 191 to 447 (EAHLREIKSL…HIAIFFNKED (257 aa)) folds into the NB-ARC domain. LRR repeat units follow at residues 539 to 562 (ISRI…QFLK), 583 to 605 (PCLL…TFNP), 606 to 628 (EHLV…TQPL), 629 to 652 (KNLK…SNAT), 654 to 675 (LEYL…ISHL), 676 to 698 (HKLE…HMNL), 699 to 724 (ESLQ…NIRY), 738 to 760 (CPGL…THLP), 761 to 782 (TSLT…CFKS), and 784 to 809 (HQLK…SLLT).

The catalysed reaction is NAD(+) + H2O = ADP-D-ribose + nicotinamide + H(+). Its function is as follows. TIR-NB-LRR receptor-like protein that confers resistance to the pathogen Leptosphaeria maculans (blackleg disease). This is Disease resistance protein RML1B from Arabidopsis thaliana (Mouse-ear cress).